Here is a 366-residue protein sequence, read N- to C-terminus: Chorismate synthase (366 aa).

Arg-48 and Arg-54 together coordinate NADP(+). FMN-binding positions include 125–127 (RSS), 238–239 (NA), Gly-278, 293–297 (KPTSS), and Arg-319.

The protein belongs to the chorismate synthase family. Homotetramer. It depends on FMNH2 as a cofactor.

It carries out the reaction 5-O-(1-carboxyvinyl)-3-phosphoshikimate = chorismate + phosphate. It functions in the pathway metabolic intermediate biosynthesis; chorismate biosynthesis; chorismate from D-erythrose 4-phosphate and phosphoenolpyruvate: step 7/7. In terms of biological role, catalyzes the anti-1,4-elimination of the C-3 phosphate and the C-6 proR hydrogen from 5-enolpyruvylshikimate-3-phosphate (EPSP) to yield chorismate, which is the branch point compound that serves as the starting substrate for the three terminal pathways of aromatic amino acid biosynthesis. This reaction introduces a second double bond into the aromatic ring system. This chain is Chorismate synthase, found in Paraburkholderia xenovorans (strain LB400).